Consider the following 138-residue polypeptide: Acidic phospholipase A2 ammodytin I1 (138 aa).

An N-terminal signal peptide occupies residues 1 to 16 (MRILWIVAVCLIGAEG). 7 disulfides stabilise this stretch: cysteine 42/cysteine 131, cysteine 44/cysteine 60, cysteine 59/cysteine 111, cysteine 65/cysteine 138, cysteine 66/cysteine 104, cysteine 73/cysteine 97, and cysteine 91/cysteine 102. 3 residues coordinate Ca(2+): tyrosine 43, glycine 45, and glycine 47. Residue histidine 63 is part of the active site. Aspartate 64 is a binding site for Ca(2+). Residue aspartate 105 is part of the active site.

The protein belongs to the phospholipase A2 family. Group II subfamily. D49 sub-subfamily. Ca(2+) serves as cofactor. Expressed by the venom gland.

The protein localises to the secreted. It carries out the reaction a 1,2-diacyl-sn-glycero-3-phosphocholine + H2O = a 1-acyl-sn-glycero-3-phosphocholine + a fatty acid + H(+). Functionally, snake venom phospholipase A2 (PLA2) that has enzymatic activity but is non-toxic. PLA2 catalyzes the calcium-dependent hydrolysis of the 2-acyl groups in 3-sn-phosphoglycerides. The sequence is that of Acidic phospholipase A2 ammodytin I1 from Vipera ammodytes ammodytes (Western sand viper).